The sequence spans 96 residues: uncharacterized protein (96 aa).

The first 30 residues, 1–30, serve as a signal peptide directing secretion; it reads MLILSVFCAVFYAFLTAIVANFSLKTLAIG. At 31-54 the chain is on the extracellular side; the sequence is ATFVKSHLKSNPIPYGDLVADSLD. The chain crosses the membrane as a helical span at residues 55 to 75; it reads FGNITPTVTLLFAILIAVLAL. The Cytoplasmic segment spans residues 76-96; that stretch reads KCEFSCSTSAPAGQASGRKVK.

The protein resides in the membrane. This is an uncharacterized protein from Dictyostelium discoideum (Social amoeba).